Reading from the N-terminus, the 696-residue chain is Translation factor waclaw, mitochondrial (696 aa).

A mitochondrion-targeting transit peptide spans 1-76; that stretch reads MIVGYSVFFH…RNLSTTNQVK (76 aa). A tr-type G domain is found at 97 to 278; sequence ERIRNFSIIA…RVIETVPPPQ (182 aa). GTP-binding positions include 106-113, 171-175, and 225-228; these read AHVDHGKS, DTPGH, and NKID.

The protein belongs to the TRAFAC class translation factor GTPase superfamily. Classic translation factor GTPase family. LepA subfamily.

Its subcellular location is the mitochondrion inner membrane. The enzyme catalyses GTP + H2O = GDP + phosphate + H(+). Promotes mitochondrial protein synthesis. May act as a fidelity factor of the translation reaction, by catalyzing a one-codon backward translocation of tRNAs on improperly translocated ribosomes. Binds to mitochondrial ribosomes in a GTP-dependent manner. In Drosophila melanogaster (Fruit fly), this protein is Translation factor waclaw, mitochondrial.